A 223-amino-acid polypeptide reads, in one-letter code: Ribonuclease 3 (223 aa).

One can recognise an RNase III domain in the interval Leu4–Gly127. A Mg(2+)-binding site is contributed by Glu40. Asp44 is an active-site residue. Residues Asp113 and Glu116 each coordinate Mg(2+). Glu116 is a catalytic residue. In terms of domain architecture, DRBM spans Asp154–Lys223.

It belongs to the ribonuclease III family. Homodimer. The cofactor is Mg(2+).

The protein localises to the cytoplasm. It catalyses the reaction Endonucleolytic cleavage to 5'-phosphomonoester.. Its function is as follows. Digests double-stranded RNA. Involved in the processing of primary rRNA transcript to yield the immediate precursors to the large and small rRNAs (23S and 16S). Processes some mRNAs, and tRNAs when they are encoded in the rRNA operon. Processes pre-crRNA and tracrRNA of type II CRISPR loci if present in the organism. The chain is Ribonuclease 3 from Campylobacter concisus (strain 13826).